The primary structure comprises 1470 residues: Calmodulin-regulated spectrin-associated protein 2 (1470 aa).

Residues 222–335 form the Calponin-homology (CH) domain; the sequence is WKLVPARYRK…FMAELFWWFE (114 aa). A disordered region spans residues 374 to 397; it reads SSSSSDFTSRYTRPQTHSSVSGGI. The segment covering 380–390 has biased composition (polar residues); that stretch reads FTSRYTRPQTH. Phosphoserine occurs at positions 402 and 404. Phosphothreonine is present on Thr412. Phosphoserine is present on residues Ser450, Ser581, Ser582, Ser594, and Ser656. Disordered regions lie at residues 580–622 and 648–712; these read QSSP…EDSS and ASNP…EGSE. Thr661 carries the post-translational modification Phosphothreonine. Ser663 is modified (phosphoserine). The span at 663-682 shows a compositional bias: low complexity; sequence STKSQPGSSASSSSGVKMTS. Positions 686–696 are enriched in basic and acidic residues; that stretch reads QKFRKLNHTDG. Positions 739-776 form a coiled coil; it reads LLASEMVHLRMRLEEKRRAIEAQKKKMEAAFTKQRQKM. Basic and acidic residues predominate over residues 796-835; it reads REEAAGAEDEKVYTDRAKEKESQKMDGQRSKSLADIKESM. The disordered stretch occupies residues 796–864; the sequence is REEAAGAEDE…QWNLTSPSEE (69 aa). Ser845 carries the post-translational modification Phosphoserine. Positions 870–909 form a coiled coil; it reads ELLEYTKSIEKLNSSLHFLQQEMQRLSLQQEMLMQMREQQ. The tract at residues 905-1016 is MBD region; it reads MREQQSWVIS…IQTRSFVCFG (112 aa). Ser914 and Ser919 each carry phosphoserine. 2 disordered regions span residues 930-1059 and 1078-1099; these read RQAG…PLES and NEDQ…PTAP. Residues 935–946 show a composition bias toward low complexity; the sequence is SSAAAPFSADSP. Positions 952–971 are enriched in polar residues; the sequence is SPQSSTRKSASFSVKNQRTP. Phosphothreonine occurs at positions 979, 984, and 986. Ser990 and Ser1001 each carry phosphoserine. Polar residues predominate over residues 1001–1011; the sequence is SPSQVPIQTRS. 2 stretches are compositionally biased toward basic and acidic residues: residues 1020–1037 and 1044–1056; these read EPQK…EPSE and SCDH…EVKP. A compositionally biased stretch (pro residues) spans 1086 to 1098; sequence TDPPPKPVFPPTA. Ser1129 is subject to Phosphoserine. Positions 1147–1219 form a coiled coil; the sequence is KDDQKAENDM…REFIRQEYMR (73 aa). Residues 1167-1233 are compositionally biased toward basic and acidic residues; that stretch reads RLRREKETQL…KLMEDMDTVI (67 aa). Positions 1167-1327 are disordered; sequence RLRREKETQL…TTSSVASGTE (161 aa). Polar residues predominate over residues 1268–1280; the sequence is SSLSLASLNTGDT. Residues Ser1294, Ser1300, and Ser1302 each carry the phosphoserine modification. Over residues 1315 to 1327 the composition is skewed to polar residues; it reads NASTTSSVASGTE. Residues 1330–1464 enclose the CKK domain; it reads GPKLYKEPSA…QTKRPVTPKK (135 aa).

Belongs to the CAMSAP1 family. In terms of assembly, interacts with CAMSAP3. Interacts with KATNA1 and KATNB1; leading to regulate the length of CAMSAP2-decorated microtubule stretches. Interacts with a complex formed by AKAP9 and PDE4DIP; this interaction, which is PDE4DIP isoform-specific, recruits CAMSAP2 to the Golgi. Interacts with MAPRE1/EB1. As to expression, present in the soma, axon, and dendritic shaft of hippocampal neurons (at protein level).

The protein localises to the cytoplasm. The protein resides in the cytoskeleton. It is found in the golgi apparatus. It localises to the cilium basal body. Functionally, key microtubule-organizing protein that specifically binds the minus-end of non-centrosomal microtubules and regulates their dynamics and organization. Specifically recognizes growing microtubule minus-ends and autonomously decorates and stabilizes microtubule lattice formed by microtubule minus-end polymerization. Acts on free microtubule minus-ends that are not capped by microtubule-nucleating proteins or other factors and protects microtubule minus-ends from depolymerization. In addition, it also reduces the velocity of microtubule polymerization. Through the microtubule cytoskeleton, also regulates the organization of cellular organelles including the Golgi and the early endosomes. Essential for the tethering, but not for nucleation of non-centrosomal microtubules at the Golgi: together with Golgi-associated proteins AKAP9 and PDE4DIP, required to tether non-centrosomal minus-end microtubules to the Golgi, an important step for polarized cell movement. Also acts as a regulator of neuronal polarity and development: localizes to non-centrosomal microtubule minus-ends in neurons and stabilizes non-centrosomal microtubules, which is required for neuronal polarity, axon specification and dendritic branch formation. Through the microtubule cytoskeleton, regulates the autophagosome transport. In Rattus norvegicus (Rat), this protein is Calmodulin-regulated spectrin-associated protein 2.